The following is an 840-amino-acid chain: Leucine--tRNA ligase (840 aa).

Residues 44–55 (PYPSANGLHVGH) carry the 'HIGH' region motif. Residues 617 to 621 (KMSKS) carry the 'KMSKS' region motif. Lysine 620 is a binding site for ATP.

Belongs to the class-I aminoacyl-tRNA synthetase family.

It localises to the cytoplasm. The enzyme catalyses tRNA(Leu) + L-leucine + ATP = L-leucyl-tRNA(Leu) + AMP + diphosphate. The sequence is that of Leucine--tRNA ligase from Borreliella afzelii (strain PKo) (Borrelia afzelii).